The following is a 715-amino-acid chain: Phosphoribosylformylglycinamidine synthase subunit PurL (715 aa).

The active site involves H33. Y36 provides a ligand contact to ATP. Mg(2+) is bound at residue E77. Residues 78–81 (SHNH) and R100 contribute to the substrate site. Catalysis depends on H79, which acts as the Proton acceptor. A Mg(2+)-binding site is contributed by D101. Residue Q225 coordinates substrate. D253 lines the Mg(2+) pocket. 297–299 (ESQ) serves as a coordination point for substrate. The ATP site is built by N475 and G512. N513 is a binding site for Mg(2+). S515 is a binding site for substrate.

It belongs to the FGAMS family. As to quaternary structure, monomer. Part of the FGAM synthase complex composed of 1 PurL, 1 PurQ and 2 PurS subunits.

Its subcellular location is the cytoplasm. The catalysed reaction is N(2)-formyl-N(1)-(5-phospho-beta-D-ribosyl)glycinamide + L-glutamine + ATP + H2O = 2-formamido-N(1)-(5-O-phospho-beta-D-ribosyl)acetamidine + L-glutamate + ADP + phosphate + H(+). It participates in purine metabolism; IMP biosynthesis via de novo pathway; 5-amino-1-(5-phospho-D-ribosyl)imidazole from N(2)-formyl-N(1)-(5-phospho-D-ribosyl)glycinamide: step 1/2. In terms of biological role, part of the phosphoribosylformylglycinamidine synthase complex involved in the purines biosynthetic pathway. Catalyzes the ATP-dependent conversion of formylglycinamide ribonucleotide (FGAR) and glutamine to yield formylglycinamidine ribonucleotide (FGAM) and glutamate. The FGAM synthase complex is composed of three subunits. PurQ produces an ammonia molecule by converting glutamine to glutamate. PurL transfers the ammonia molecule to FGAR to form FGAM in an ATP-dependent manner. PurS interacts with PurQ and PurL and is thought to assist in the transfer of the ammonia molecule from PurQ to PurL. This chain is Phosphoribosylformylglycinamidine synthase subunit PurL, found in Methanosarcina acetivorans (strain ATCC 35395 / DSM 2834 / JCM 12185 / C2A).